A 596-amino-acid polypeptide reads, in one-letter code: Fumarate reductase (cytochrome) (596 aa).

The signal sequence occupies residues 1–25 (MKKMNLAVCIATLMGTAGLMGTAVA). Heme c is bound by residues H33, C39, C42, H43, C61, C64, H65, H83, H86, C93, C96, H97, A99, H100, C107, C110, and H111. The interval 143–596 (ALASAPHDTV…EEAAKYSKKN (454 aa)) is flavoprotein-like. 8 residues coordinate FAD: A162, E181, N189, A194, G195, G196, G303, and D369. G195 contributes to the fumarate binding site. Residue G195 coordinates succinate. Y386 lines the heme c pocket. The succinate site is built by H390, T402, and E403. Fumarate contacts are provided by T402 and E403. R427 functions as the Proton donor in the catalytic mechanism. H529 contributes to the fumarate binding site. Residue H529 participates in succinate binding. H530 and E559 together coordinate FAD. Residues R569 and G572 each coordinate fumarate. The succinate site is built by R569 and G572. Residues A574 and I575 each contribute to the FAD site.

In the C-terminal section; belongs to the FAD-dependent oxidoreductase 2 family. FRD/SDH subfamily. Monomer. It depends on FAD as a cofactor. The cofactor is heme c.

The protein resides in the periplasm. The enzyme catalyses 2 Fe(III)-[cytochrome c] + succinate = fumarate + 2 Fe(II)-[cytochrome c] + 2 H(+). Mesaconic acid is a competitive inhibitor of fumarate reduction. Functionally, flavocytochrome that catalyzes the reduction of fumarate to succinate. Is essential for fumarate respiration during anaerobic growth, acting as the terminal reductase. Receives electrons from the membrane-bound tetraheme c-type cytochrome CymA. Is essentially unidirectional, catalyzing only fumarate reduction. Cannot reduce nitrite, dimethylsulphoxide, trimethylamine-N-oxide (TMAO) or sulfite. In vitro, can use the artificial electron donor methyl viologen. This is Fumarate reductase (cytochrome) from Shewanella frigidimarina (strain NCIMB 400).